Consider the following 223-residue polypeptide: Small ribosomal subunit protein uS3 (223 aa).

Residues I39–K115 form the KH type-2 domain.

Belongs to the universal ribosomal protein uS3 family. As to quaternary structure, part of the 30S ribosomal subunit. Forms a tight complex with proteins S10 and S14.

Its function is as follows. Binds the lower part of the 30S subunit head. Binds mRNA in the 70S ribosome, positioning it for translation. This is Small ribosomal subunit protein uS3 from Leuconostoc citreum (strain KM20).